The sequence spans 73 residues: Mauriporin (73 aa).

An N-terminal signal peptide occupies residues 1–22; sequence MNKKTLLVIFFITMLIVDEVNS.

It belongs to the non-disulfide-bridged peptide (NDBP) superfamily. Long chain multifunctional peptide (group 2) family. As to expression, expressed by the venom gland.

The protein resides in the secreted. It is found in the target cell membrane. Functionally, amphipathic peptide that displays potent antimicrobial activities against a range of Gram-positive and Gram-negative planktonic bacteria with MIC values in the range 5 uM to 10 uM. In more details, it is active on Listeria ivanovii (MIC=5 uM), Staphylococcus epidermidis (MIC=10 uM), Salmonella enterica (MIC=5 uM), Pseudomonas aeruginosa (ATCC 27853) (MIC=5 uM), Acinetobacter baumannii (MIC=5 uM), Klebsiella pneumoniae (MIC=5 uM), Escherichia coli (MIC=7.5 uM), Salmonella typhimurium (MIC=7.5 uM), Pseudomonas aeruginosa (ATCC 9027) (MIC=10 uM). Is also able to prevent P.aeruginosa biofilm formation while showing weak hemolytic activity towards human erythrocytes. Probably induces bacterial cell death through membrane permeabilization. Moreover, shows DNA-binding activities. Also exerts potent selective cytotoxic and antiproliferative activity against three different prostate cancer cell lines (IC(50)=4.4-7.8 uM), compared to non-tumorigenic cell lines (IC(50)=59.7 uM in Vero and 62.5 uM in HUVEC cells). This peptide possibly exerts its cytotoxic activity through a necrotic mode of cell death. Only shows diminished hemolytic activity against sheep erythrocytes. Does not induce cell death through apoptosis and consequently is not acting upon an intracellular target. The sequence is that of Mauriporin from Androctonus mauritanicus (Fat-tailed scorpion).